The sequence spans 346 residues: PhoH-like protein (346 aa).

142–149 (GPAGTGKT) provides a ligand contact to ATP.

Belongs to the PhoH family.

It is found in the cytoplasm. The chain is PhoH-like protein (ybeZ) from Escherichia coli O157:H7.